We begin with the raw amino-acid sequence, 197 residues long: C-type lectin domain family 3 member A (197 aa).

Residues 1-24 form the signal peptide; that stretch reads MAKNGLVIYILVITLLLDQTSCHA. 3 cysteine pairs are disulfide-bonded: Cys68/Cys78, Cys95/Cys191, and Cys167/Cys183. Residues 74-192 form the C-type lectin domain; the sequence is FHKKCYLAAE…CHSSKRYICE (119 aa).

Its subcellular location is the secreted. Functionally, promotes cell adhesion to laminin and fibronectin. In Bos taurus (Bovine), this protein is C-type lectin domain family 3 member A (CLEC3A).